A 339-amino-acid chain; its full sequence is Glyceraldehyde-3-phosphate dehydrogenase (339 aa).

Residues arginine 12–isoleucine 13, aspartate 39, arginine 84, and serine 127 each bind NAD(+). D-glyceraldehyde 3-phosphate is bound by residues serine 157–threonine 159, threonine 188, arginine 203, threonine 216–glycine 217, and arginine 239. Residue cysteine 158 is the Nucleophile of the active site. Asparagine 320 is a binding site for NAD(+).

It belongs to the glyceraldehyde-3-phosphate dehydrogenase family. As to quaternary structure, homotetramer.

Its subcellular location is the cytoplasm. The enzyme catalyses D-glyceraldehyde 3-phosphate + phosphate + NAD(+) = (2R)-3-phospho-glyceroyl phosphate + NADH + H(+). Its pathway is carbohydrate degradation; glycolysis; pyruvate from D-glyceraldehyde 3-phosphate: step 1/5. Functionally, catalyzes the oxidative phosphorylation of glyceraldehyde 3-phosphate (G3P) to 1,3-bisphosphoglycerate (BPG) using the cofactor NAD. The first reaction step involves the formation of a hemiacetal intermediate between G3P and a cysteine residue, and this hemiacetal intermediate is then oxidized to a thioester, with concomitant reduction of NAD to NADH. The reduced NADH is then exchanged with the second NAD, and the thioester is attacked by a nucleophilic inorganic phosphate to produce BPG. This Mycobacterium avium protein is Glyceraldehyde-3-phosphate dehydrogenase (gapA).